We begin with the raw amino-acid sequence, 446 residues long: Nuclear envelope morphology protein 1 (446 aa).

A disordered region spans residues 53 to 80 (VDQQYDHSSSHLKESDQNQERKNSVPKK). Over residues 56 to 75 (QYDHSSSHLKESDQNQERKN) the composition is skewed to basic and acidic residues. A helical membrane pass occupies residues 87–103 (ILIEKIASILWALLLFL). The segment at 132 to 168 (HTDKRNRGSNASENELPVSSSNINDSSEKTNPKNCNL) is disordered. Positions 139-156 (GSNASENELPVSSSNIND) are enriched in polar residues. In terms of domain architecture, FCP1 homology spans 247–424 (NTQKKKKLVI…LNLLPFLEAM (178 aa)).

Belongs to the Dullard family. Component of the NEM1-SPO7 complex.

Its subcellular location is the endoplasmic reticulum membrane. It is found in the nucleus membrane. The enzyme catalyses O-phospho-L-seryl-[protein] + H2O = L-seryl-[protein] + phosphate. It catalyses the reaction O-phospho-L-threonyl-[protein] + H2O = L-threonyl-[protein] + phosphate. Functionally, catalytic component of the NEM1-SPO7 complex which acts as a phosphatase and dephosphorylates the phosphatidic acid phosphohydrolase PAH1. Essential for the formation of a spherical nucleus and meiotic division. The NEM1-SPOo7 protein phosphatase is required for efficient mitophagy under prolonged respiration, as well as for reticulophagy and pexophagy. This is Nuclear envelope morphology protein 1 (NEM1) from Saccharomyces cerevisiae (strain ATCC 204508 / S288c) (Baker's yeast).